Consider the following 447-residue polypeptide: N-succinylarginine dihydrolase (447 aa).

Residues 19–28 (AGLSFGNEAS), Asn110, and 137–138 (HR) each bind substrate. Glu174 is a catalytic residue. Arg212 contacts substrate. The active site involves His248. Substrate contacts are provided by Asp250 and Asn359. Residue Cys365 is the Nucleophile of the active site.

Belongs to the succinylarginine dihydrolase family. Homodimer.

It carries out the reaction N(2)-succinyl-L-arginine + 2 H2O + 2 H(+) = N(2)-succinyl-L-ornithine + 2 NH4(+) + CO2. It participates in amino-acid degradation; L-arginine degradation via AST pathway; L-glutamate and succinate from L-arginine: step 2/5. In terms of biological role, catalyzes the hydrolysis of N(2)-succinylarginine into N(2)-succinylornithine, ammonia and CO(2). The chain is N-succinylarginine dihydrolase from Salmonella paratyphi B (strain ATCC BAA-1250 / SPB7).